The primary structure comprises 170 residues: Adenine phosphoribosyltransferase (170 aa).

Belongs to the purine/pyrimidine phosphoribosyltransferase family. Homodimer.

The protein resides in the cytoplasm. The catalysed reaction is AMP + diphosphate = 5-phospho-alpha-D-ribose 1-diphosphate + adenine. Its pathway is purine metabolism; AMP biosynthesis via salvage pathway; AMP from adenine: step 1/1. Its function is as follows. Catalyzes a salvage reaction resulting in the formation of AMP, that is energically less costly than de novo synthesis. The polypeptide is Adenine phosphoribosyltransferase (Mesoplasma florum (strain ATCC 33453 / NBRC 100688 / NCTC 11704 / L1) (Acholeplasma florum)).